Here is a 218-residue protein sequence, read N- to C-terminus: Small ribosomal subunit protein uS3c (218 aa).

Residues 47 to 118 enclose the KH type-2 domain; sequence VYKNIRNSSN…KLRMTLTEVT (72 aa).

This sequence belongs to the universal ribosomal protein uS3 family. Part of the 30S ribosomal subunit.

The protein resides in the plastid. It localises to the chloroplast. The sequence is that of Small ribosomal subunit protein uS3c (rps3) from Physcomitrium patens (Spreading-leaved earth moss).